A 221-amino-acid polypeptide reads, in one-letter code: uncharacterized protein (221 aa).

The first 30 residues, methionine 1–glutamine 30, serve as a signal peptide directing secretion.

It is found in the virion. This is an uncharacterized protein from Acanthamoeba polyphaga mimivirus (APMV).